Reading from the N-terminus, the 646-residue chain is MRVSNVTVRKRLLFVLLFGVIVFLIIDTRLGYVQFVMGEKLTSLAKDSWSRNLPFEPERGEILDRNGVKLATNKSAPTVFVVPRQVQNPMKTSKQLAAVLNMSEEKVYKHVTKKASIEKITPEGRKISNEKAKEIKALDLKGVYVAEDSIRHYPFGSFLSHVLGFAGIDNQGLLGLEAYYDDDLKGEKGSVKFYTDAKGKKMPDEADDYTPPKDGLDMKLTVDSKVQTIMERELDNAEAKYHPDGMIAVAMNPKNGEILGMSSRPDFDPADYQSVDPSVYNRNLPVWSTYEPGSTFKIITLAAALEEQKVNLKRDQFYDKGHAEVDGARLRCWKRGGHGLQTYLEVVQNSCNPGFVELGERLGKEKLFKYIKDFGFGQKTGIDLQGEGTGILFPLERVGPVEQATTAFGQGVSVTPIQQVAAVSAAVNGGTLYTPYIAKEWIDPVTKKTVKKQSPIAKKQVISEETSKQIRYALESVVAEGTGRNAFVEGYRVGGKTGTAQKVKDGKYLENNHIVSFIGFAPADDPSLVVYVAVDNPKGTIQFGGTVAAPIVGNIMRDSLPELGVKPRKNQIEKKYQWNDTKTIEVPNVVGMSVSDLESLLVNLNVDASGKGSKIVKQSPAAGTKVKEGSKIRVYLTEEDEKEAAD.

Ser294 serves as the catalytic Acyl-ester intermediate. The PASTA domain occupies 580–638; the sequence is DTKTIEVPNVVGMSVSDLESLLVNLNVDASGKGSKIVKQSPAAGTKVKEGSKIRVYLTE.

The protein belongs to the transpeptidase family.

The protein localises to the cell membrane. The enzyme catalyses Preferential cleavage: (Ac)2-L-Lys-D-Ala-|-D-Ala. Also transpeptidation of peptidyl-alanyl moieties that are N-acyl substituents of D-alanine.. Its pathway is cell wall biogenesis; peptidoglycan biosynthesis. Its function is as follows. Penicillin-binding protein with an unknown catalytic activity. May have a specialized role in the morphogenesis of spore cortex, which is a modified form of peptidoglycan. Spore cortex formation is determined primarily by the mother cell. This Bacillus subtilis (strain 168) protein is Stage V sporulation protein D (spoVD).